We begin with the raw amino-acid sequence, 393 residues long: Dual-specificity RNA methyltransferase RlmN (393 aa).

A disordered region spans residues 1–22 (MSEQLLSELSPVAATSPSPAPA). Residues 10–22 (SPVAATSPSPAPA) show a composition bias toward low complexity. Glu-114 (proton acceptor) is an active-site residue. The 239-residue stretch at 120 to 358 (EDDRATLCVS…TTIVRKTRGD (239 aa)) folds into the Radical SAM core domain. Cys-127 and Cys-364 are oxidised to a cystine. [4Fe-4S] cluster is bound by residues Cys-134, Cys-138, and Cys-141. S-adenosyl-L-methionine contacts are provided by residues 188 to 189 (GE), Ser-220, 242 to 244 (SLH), and Asn-321. The S-methylcysteine intermediate role is filled by Cys-364.

The protein belongs to the radical SAM superfamily. RlmN family. It depends on [4Fe-4S] cluster as a cofactor.

It is found in the cytoplasm. It carries out the reaction adenosine(2503) in 23S rRNA + 2 reduced [2Fe-2S]-[ferredoxin] + 2 S-adenosyl-L-methionine = 2-methyladenosine(2503) in 23S rRNA + 5'-deoxyadenosine + L-methionine + 2 oxidized [2Fe-2S]-[ferredoxin] + S-adenosyl-L-homocysteine. It catalyses the reaction adenosine(37) in tRNA + 2 reduced [2Fe-2S]-[ferredoxin] + 2 S-adenosyl-L-methionine = 2-methyladenosine(37) in tRNA + 5'-deoxyadenosine + L-methionine + 2 oxidized [2Fe-2S]-[ferredoxin] + S-adenosyl-L-homocysteine. Its function is as follows. Specifically methylates position 2 of adenine 2503 in 23S rRNA and position 2 of adenine 37 in tRNAs. m2A2503 modification seems to play a crucial role in the proofreading step occurring at the peptidyl transferase center and thus would serve to optimize ribosomal fidelity. This chain is Dual-specificity RNA methyltransferase RlmN, found in Sodalis glossinidius (strain morsitans).